The primary structure comprises 140 residues: Bacilliredoxin STH2395 (140 aa).

It belongs to the bacilliredoxin family.

The protein is Bacilliredoxin STH2395 of Symbiobacterium thermophilum (strain DSM 24528 / JCM 14929 / IAM 14863 / T).